A 393-amino-acid chain; its full sequence is Probable acetyl-CoA acyltransferase (393 aa).

Cys88 functions as the Acyl-thioester intermediate in the catalytic mechanism. Active-site proton acceptor residues include His349 and Cys378.

The protein belongs to the thiolase-like superfamily. Thiolase family.

The protein localises to the cytoplasm. The catalysed reaction is 2 acetyl-CoA = acetoacetyl-CoA + CoA. This is Probable acetyl-CoA acyltransferase from Staphylococcus aureus (strain bovine RF122 / ET3-1).